Reading from the N-terminus, the 167-residue chain is NADH-quinone oxidoreductase subunit B 1 (167 aa).

Cys38, Cys39, Cys104, and Cys133 together coordinate [4Fe-4S] cluster.

It belongs to the complex I 20 kDa subunit family. As to quaternary structure, NDH-1 is composed of 14 different subunits. Subunits NuoB, C, D, E, F, and G constitute the peripheral sector of the complex. It depends on [4Fe-4S] cluster as a cofactor.

It localises to the cell membrane. It catalyses the reaction a quinone + NADH + 5 H(+)(in) = a quinol + NAD(+) + 4 H(+)(out). NDH-1 shuttles electrons from NADH, via FMN and iron-sulfur (Fe-S) centers, to quinones in the respiratory chain. The immediate electron acceptor for the enzyme in this species is believed to be ubiquinone. Couples the redox reaction to proton translocation (for every two electrons transferred, four hydrogen ions are translocated across the cytoplasmic membrane), and thus conserves the redox energy in a proton gradient. This chain is NADH-quinone oxidoreductase subunit B 1, found in Roseiflexus castenholzii (strain DSM 13941 / HLO8).